A 474-amino-acid polypeptide reads, in one-letter code: Cysteine--tRNA ligase (474 aa).

Position 29 (Cys-29) interacts with Zn(2+). The 'HIGH' region signature appears at 31-41; that stretch reads ATVQGEPHVGH. Residues Cys-211, His-236, and Glu-240 each contribute to the Zn(2+) site. A 'KMSKS' region motif is present at residues 267–271; sequence KMSKS. Lys-270 lines the ATP pocket.

Belongs to the class-I aminoacyl-tRNA synthetase family. Monomer. Requires Zn(2+) as cofactor.

Its subcellular location is the cytoplasm. It catalyses the reaction tRNA(Cys) + L-cysteine + ATP = L-cysteinyl-tRNA(Cys) + AMP + diphosphate. The protein is Cysteine--tRNA ligase of Beutenbergia cavernae (strain ATCC BAA-8 / DSM 12333 / CCUG 43141 / JCM 11478 / NBRC 16432 / NCIMB 13614 / HKI 0122).